The sequence spans 529 residues: Bifunctional purine biosynthesis protein PurH (529 aa).

The MGS-like domain occupies 1-148; it reads MNNARPIRRA…KNHKDVVIVV (148 aa).

Belongs to the PurH family.

It catalyses the reaction (6R)-10-formyltetrahydrofolate + 5-amino-1-(5-phospho-beta-D-ribosyl)imidazole-4-carboxamide = 5-formamido-1-(5-phospho-D-ribosyl)imidazole-4-carboxamide + (6S)-5,6,7,8-tetrahydrofolate. It carries out the reaction IMP + H2O = 5-formamido-1-(5-phospho-D-ribosyl)imidazole-4-carboxamide. It participates in purine metabolism; IMP biosynthesis via de novo pathway; 5-formamido-1-(5-phospho-D-ribosyl)imidazole-4-carboxamide from 5-amino-1-(5-phospho-D-ribosyl)imidazole-4-carboxamide (10-formyl THF route): step 1/1. It functions in the pathway purine metabolism; IMP biosynthesis via de novo pathway; IMP from 5-formamido-1-(5-phospho-D-ribosyl)imidazole-4-carboxamide: step 1/1. In Shewanella amazonensis (strain ATCC BAA-1098 / SB2B), this protein is Bifunctional purine biosynthesis protein PurH.